Reading from the N-terminus, the 549-residue chain is Chaperonin GroEL 1 (549 aa).

Residues 30-33 (TLGP), Lys51, 87-91 (DGTTT), Gly415, 479-481 (NAA), and Asp495 each bind ATP.

Belongs to the chaperonin (HSP60) family. Forms a cylinder of 14 subunits composed of two heptameric rings stacked back-to-back. Interacts with the co-chaperonin GroES.

Its subcellular location is the cytoplasm. It catalyses the reaction ATP + H2O + a folded polypeptide = ADP + phosphate + an unfolded polypeptide.. In terms of biological role, together with its co-chaperonin GroES, plays an essential role in assisting protein folding. The GroEL-GroES system forms a nano-cage that allows encapsulation of the non-native substrate proteins and provides a physical environment optimized to promote and accelerate protein folding. This chain is Chaperonin GroEL 1, found in Azoarcus sp. (strain BH72).